Consider the following 123-residue polypeptide: U9-barytoxin-Tl1a (123 aa).

The first 18 residues, 1 to 18 (MNTMITFLVLFVLTAANG), serve as a signal peptide directing secretion. A propeptide spanning residues 19-77 (APEANERKIPEAIHNEDQSLAEMAEELMFFLQQTEFEAPLLQEEEEAEXAEXRNSRERR) is cleaved from the precursor. Cystine bridges form between C78–C93, C85–C98, and C92–C112.

The protein belongs to the neurotoxin 14 (magi-1) family. 05 (ICK-7) subfamily. ICK-7 sub-subfamily. In terms of tissue distribution, expressed by the venom gland.

The protein resides in the secreted. Ion channel inhibitor. In Trittame loki (Brush-footed trapdoor spider), this protein is U9-barytoxin-Tl1a.